A 166-amino-acid polypeptide reads, in one-letter code: MLLEEVCVGDRLSGAAARGDVQEVRRLLHRELVHPDALNRFGKTALQVMMFGSPAVALELLKQGASPNVQDASGTSPVHDAARTGFLDTLKVLVEHGADVNALDSTGSLPIHLAIREGHSSVVSFLAPESDLHHRDASGLTPLELARQRGAQNLMDILQGHMMIPM.

Met-1 bears the N-acetylmethionine mark. ANK repeat units lie at residues 41–69, 73–102, 106–135, and 138–165; these read FGKT…SPNV, SGTS…DVNA, TGSL…LHHR, and SGLT…MMIP.

It belongs to the CDKN2 cyclin-dependent kinase inhibitor family. Interacts with CDK6.

The protein resides in the nucleus. It is found in the cytoplasm. In terms of biological role, interacts strongly with CDK4 and CDK6 and inhibits them. This chain is Cyclin-dependent kinase 4 inhibitor D (Cdkn2d), found in Mus musculus (Mouse).